A 500-amino-acid polypeptide reads, in one-letter code: L-arabinose isomerase (500 aa).

Mn(2+)-binding residues include glutamate 306, glutamate 333, histidine 350, and histidine 450.

Belongs to the arabinose isomerase family. Homohexamer. Mn(2+) serves as cofactor.

It carries out the reaction beta-L-arabinopyranose = L-ribulose. Its pathway is carbohydrate degradation; L-arabinose degradation via L-ribulose; D-xylulose 5-phosphate from L-arabinose (bacterial route): step 1/3. Its function is as follows. Catalyzes the conversion of L-arabinose to L-ribulose. This is L-arabinose isomerase from Yersinia pestis (strain Pestoides F).